Here is a 289-residue protein sequence, read N- to C-terminus: Serine/threonine-protein phosphatase Pgam5, mitochondrial (289 aa).

A helical membrane pass occupies residues 7–23; the sequence is FACGTGAGLLTFYLTKL.

The protein belongs to the phosphoglycerate mutase family. BPG-dependent PGAM subfamily. As to quaternary structure, interacts with Pk92B/ASK1.

Its subcellular location is the mitochondrion outer membrane. The enzyme catalyses O-phospho-L-seryl-[protein] + H2O = L-seryl-[protein] + phosphate. The catalysed reaction is O-phospho-L-threonyl-[protein] + H2O = L-threonyl-[protein] + phosphate. Functionally, displays phosphatase activity for serine/threonine residues, and dephosphorylates and activates Pk92B kinase. Has apparently no phosphoglycerate mutase activity. The chain is Serine/threonine-protein phosphatase Pgam5, mitochondrial from Drosophila persimilis (Fruit fly).